Here is a 222-residue protein sequence, read N- to C-terminus: Ras-related protein Rab-21 (222 aa).

N-acetylalanine is present on Ala-2. GTP is bound by residues Gly-25, Gly-28, Lys-29, Thr-30, Ser-31, Asn-42, Asp-43, His-45, Thr-47, and Thr-48. Thr-30 serves as a coordination point for Mg(2+). Residues 40-53 (KFNDKHITTLQASF) carry the Switch 1 motif. Mg(2+) contacts are provided by Thr-48 and Asp-71. A Switch 2 motif is present at residues 73–91 (AGQERFHALGPIYYRDSNG). Residues Gly-74, Asn-129, Lys-130, Asp-132, Ala-160, and Lys-161 each coordinate GTP. S-geranylgeranyl cysteine attachment occurs at residues Cys-218 and Cys-219. Residue Cys-219 is modified to Cysteine methyl ester. Positions 220-222 (SSG) are cleaved as a propeptide — removed in mature form.

Belongs to the small GTPase superfamily. Rab family. Interacts with the cytoplasmic tail of integrins ITGA1, ITGA2, ITGA5, ITGA6, ITGA11 and ITGB1; this interaction is dependent upon its GDP/GTP cycle. Interacts with RABGEF1 (via VPS9 domain). Interacts with ANKRD27. Interacts (in GTP-bound form) with VAMP8 in response to starvation; the interaction probably regulates VAMP8 endolysosomal trafficking. Interacts (active GTP-bound form) with TMED10; the interaction is indirect and regulates TMED10 abundance and localization at the Golgi. It depends on Mg(2+) as a cofactor.

It is found in the endoplasmic reticulum membrane. The protein localises to the golgi apparatus. It localises to the trans-Golgi network. Its subcellular location is the golgi apparatus membrane. The protein resides in the early endosome membrane. It is found in the cytoplasmic vesicle membrane. The protein localises to the cleavage furrow. It localises to the cell projection. Its subcellular location is the neuron projection. It carries out the reaction GTP + H2O = GDP + phosphate + H(+). With respect to regulation, regulated by guanine nucleotide exchange factors (GEFs) including ANKRD27 and RABGEF1, which promote the exchange of bound GDP for free GTP. Regulated by GTPase activating proteins (GAPs) which increase the GTP hydrolysis activity. Inhibited by GDP dissociation inhibitors (GDIs). The small GTPases Rab are key regulators of intracellular membrane trafficking, from the formation of transport vesicles to their fusion with membranes. Rabs cycle between an inactive GDP-bound form and an active GTP-bound form that is able to recruit to membranes different sets of downstream effectors directly responsible for vesicle formation, movement, tethering and fusion. RAB21 is involved in membrane trafficking control. Regulates integrin internalization and recycling, but does not influence the traffic of endosomally translocated receptors in general. As a result, may regulate cell adhesion and migration. During the mitosis of adherent cells, controls the endosomal trafficking of integrins which is required for the successful completion of cytokinesis. Involved in neurite growth. Following SBF2/MTMT13-mediated activation in response to starvation-induced autophagy, binds to and regulates SNARE protein VAMP8 endolysosomal transport required for SNARE-mediated autophagosome-lysosome fusion. Modulates protein levels of the cargo receptors TMED2 and TMED10, and required for appropriate Golgi localization of TMED10. In Bos taurus (Bovine), this protein is Ras-related protein Rab-21 (RAB21).